The sequence spans 88 residues: MGFTEETVRFRLDDTDKQEISKTLTSVYRSLEEKGYNPINQIIGYVLSGDPAYIPRYNDARNQIRKHERDEIIEELVRYYLKGNGIDL.

The protein belongs to the UPF0297 family.

The sequence is that of UPF0297 protein SSU98_0066 from Streptococcus suis (strain 98HAH33).